The sequence spans 386 residues: Galactokinase (386 aa).

35 to 38 lines the substrate pocket; the sequence is EHTD. ATP contacts are provided by residues serine 69 and 125–131; that span reads GAGLSSS. Residues serine 131 and glutamate 163 each coordinate Mg(2+). Aspartate 175 (proton acceptor) is an active-site residue. Tyrosine 224 is a binding site for substrate.

Belongs to the GHMP kinase family. GalK subfamily.

It is found in the cytoplasm. The catalysed reaction is alpha-D-galactose + ATP = alpha-D-galactose 1-phosphate + ADP + H(+). It functions in the pathway carbohydrate metabolism; galactose metabolism. Its function is as follows. Catalyzes the transfer of the gamma-phosphate of ATP to D-galactose to form alpha-D-galactose-1-phosphate (Gal-1-P). This is Galactokinase from Vibrio vulnificus (strain YJ016).